Reading from the N-terminus, the 110-residue chain is Iron-sulfur cluster assembly protein CyaY (110 aa).

Belongs to the frataxin family.

Functionally, involved in iron-sulfur (Fe-S) cluster assembly. May act as a regulator of Fe-S biogenesis. The polypeptide is Iron-sulfur cluster assembly protein CyaY (Pseudomonas syringae pv. syringae (strain B728a)).